Reading from the N-terminus, the 350-residue chain is ATPase GET3 (350 aa).

26-33 (KGGVGKTT) contacts ATP. Asp-57 is a catalytic residue. Glu-243 and Asn-270 together coordinate ATP. Residues Cys-282 and Cys-285 each coordinate Zn(2+).

It belongs to the arsA ATPase family. As to quaternary structure, homodimer. Component of the Golgi to ER traffic (GET) complex, which is composed of GET1, GET2 and GET3. Within the complex, GET1 and GET2 form a heterotetramer which is stabilized by phosphatidylinositol binding and which binds to the GET3 homodimer. Interacts with the chloride channel protein GEF1.

It localises to the cytoplasm. The protein resides in the endoplasmic reticulum. The protein localises to the golgi apparatus. Its function is as follows. ATPase required for the post-translational delivery of tail-anchored (TA) proteins to the endoplasmic reticulum. Recognizes and selectively binds the transmembrane domain of TA proteins in the cytosol. This complex then targets to the endoplasmic reticulum by membrane-bound receptors GET1 and GET2, where the tail-anchored protein is released for insertion. This process is regulated by ATP binding and hydrolysis. ATP binding drives the homodimer towards the closed dimer state, facilitating recognition of newly synthesized TA membrane proteins. ATP hydrolysis is required for insertion. Subsequently, the homodimer reverts towards the open dimer state, lowering its affinity for the GET1-GET2 receptor, and returning it to the cytosol to initiate a new round of targeting. Cooperates with the HDEL receptor ERD2 to mediate the ATP-dependent retrieval of resident ER proteins that contain a C-terminal H-D-E-L retention signal from the Golgi to the ER. Involved in low-level resistance to the oxyanions arsenite and arsenate, and in heat tolerance. This Candida albicans (strain SC5314 / ATCC MYA-2876) (Yeast) protein is ATPase GET3.